The primary structure comprises 878 residues: Glycogen [starch] synthase (878 aa).

Lys61 is a UDP-alpha-D-glucose binding site. Disordered stretches follow at residues 637-721 and 746-878; these read PPKP…NVIP and NEFK…KSLK. 2 stretches are compositionally biased toward low complexity: residues 641–656 and 666–676; these read ISRS…LKLS and QQQQQQQQPQP. Residues 677-692 are compositionally biased toward polar residues; it reads IGTTINLIPPSSNVSV. 4 stretches are compositionally biased toward low complexity: residues 693 to 715, 746 to 781, 795 to 830, and 838 to 878; these read TPTT…ITTP, NEFK…AAAT, PNTS…NGKP, and TKSN…KSLK.

Belongs to the glycosyltransferase 3 family.

The enzyme catalyses [(1-&gt;4)-alpha-D-glucosyl](n) + UDP-alpha-D-glucose = [(1-&gt;4)-alpha-D-glucosyl](n+1) + UDP + H(+). It participates in glycan biosynthesis; glycogen biosynthesis. Functionally, catalyzes the formation of apha-1,4 glycosidic bonds adding glucose residue from UDPG to the growing chain of glycogen. In Dictyostelium discoideum (Social amoeba), this protein is Glycogen [starch] synthase (glcS).